The primary structure comprises 256 residues: N-glycosylase/DNA lyase (256 aa).

Positions 31, 58, and 69 each coordinate 8-oxoguanine. Positions 125–184 (TLRQLSHIVGARREQKTLVFTIKILNYAYMCSRGVNRVLPFDIPIPVDYRVARLTWCAGL) are helix-hairpin-helix. Lysine 140 acts as the Schiff-base intermediate with DNA in catalysis. 8-oxoguanine contacts are provided by phenylalanine 144 and proline 170. Residue aspartate 172 is part of the active site. 8-oxoguanine is bound by residues aspartate 218 and tryptophan 222.

The protein belongs to the archaeal N-glycosylase/DNA lyase (AGOG) family.

The catalysed reaction is 2'-deoxyribonucleotide-(2'-deoxyribose 5'-phosphate)-2'-deoxyribonucleotide-DNA = a 3'-end 2'-deoxyribonucleotide-(2,3-dehydro-2,3-deoxyribose 5'-phosphate)-DNA + a 5'-end 5'-phospho-2'-deoxyribonucleoside-DNA + H(+). In terms of biological role, DNA repair enzyme that is part of the base excision repair (BER) pathway; protects from oxidative damage by removing the major product of DNA oxidation, 8-oxoguanine (GO), from single- and double-stranded DNA substrates. This chain is N-glycosylase/DNA lyase, found in Pyrobaculum aerophilum (strain ATCC 51768 / DSM 7523 / JCM 9630 / CIP 104966 / NBRC 100827 / IM2).